The primary structure comprises 322 residues: Quinolinate synthase (322 aa).

Histidine 38 and serine 55 together coordinate iminosuccinate. Cysteine 100 serves as a coordination point for [4Fe-4S] cluster. Iminosuccinate-binding positions include 126–128 and serine 143; that span reads YIN. Cysteine 186 is a binding site for [4Fe-4S] cluster. Iminosuccinate-binding positions include 212–214 and threonine 229; that span reads HPE. Cysteine 279 provides a ligand contact to [4Fe-4S] cluster.

Belongs to the quinolinate synthase family. Type 2 subfamily. It depends on [4Fe-4S] cluster as a cofactor.

Its subcellular location is the cytoplasm. It catalyses the reaction iminosuccinate + dihydroxyacetone phosphate = quinolinate + phosphate + 2 H2O + H(+). Its pathway is cofactor biosynthesis; NAD(+) biosynthesis; quinolinate from iminoaspartate: step 1/1. Catalyzes the condensation of iminoaspartate with dihydroxyacetone phosphate to form quinolinate. This chain is Quinolinate synthase, found in Aquifex aeolicus (strain VF5).